Here is a 352-residue protein sequence, read N- to C-terminus: 2'-dehydrokanamycin reductase (352 aa).

It belongs to the NAD(P)-dependent epimerase/dehydratase family.

It catalyses the reaction 2'-dehydrokanamycin A + NADPH + H(+) = kanamycin A + NADP(+). The protein operates within antibiotic biosynthesis; kanamycin biosynthesis. Functionally, mediates the conversion of 2'-dehydrokanamycin A into kanamycin A. The protein is 2'-dehydrokanamycin reductase (kanK) of Streptomyces kanamyceticus.